Consider the following 246-residue polypeptide: UDP-N-acetyl-D-mannosaminuronic acid transferase (246 aa).

The protein belongs to the glycosyltransferase 26 family.

It catalyses the reaction UDP-N-acetyl-alpha-D-mannosaminouronate + N-acetyl-alpha-D-glucosaminyl-di-trans,octa-cis-undecaprenyl diphosphate = beta-D-ManNAcA-(1-&gt;4)-alpha-D-GlcNAc-di-trans,octa-cis-undecaprenyl diphosphate + UDP + H(+). Its pathway is bacterial outer membrane biogenesis; enterobacterial common antigen biosynthesis. In terms of biological role, catalyzes the synthesis of Und-PP-GlcNAc-ManNAcA (Lipid II), the second lipid-linked intermediate involved in enterobacterial common antigen (ECA) synthesis. The sequence is that of UDP-N-acetyl-D-mannosaminuronic acid transferase from Shigella flexneri.